The primary structure comprises 117 residues: Large ribosomal subunit protein uL18 (117 aa).

This sequence belongs to the universal ribosomal protein uL18 family. Part of the 50S ribosomal subunit; part of the 5S rRNA/L5/L18/L25 subcomplex. Contacts the 5S and 23S rRNAs.

This is one of the proteins that bind and probably mediate the attachment of the 5S RNA into the large ribosomal subunit, where it forms part of the central protuberance. The polypeptide is Large ribosomal subunit protein uL18 (Vibrio atlanticus (strain LGP32) (Vibrio splendidus (strain Mel32))).